The sequence spans 75 residues: MSSGGLLLLLGLLTLWAELTPVSSLDRPKKPGLCPPRPQKPPCVRECKNDWRCPGERKCCRYGCIYECRDPIFVK.

The first 24 residues, 1 to 24 (MSSGGLLLLLGLLTLWAELTPVSS), serve as a signal peptide directing secretion. Positions 27-72 (RPKKPGLCPPRPQKPPCVRECKNDWRCPGERKCCRYGCIYECRDPI) constitute a WAP domain. Intrachain disulfides connect Cys34/Cys60, Cys43/Cys64, Cys47/Cys59, and Cys53/Cys68.

The protein belongs to the venom waprin family. As to expression, expressed by the venom gland.

It localises to the secreted. Its function is as follows. Damages membranes of susceptible bacteria. Has no hemolytic activity. Not toxic to mice. Does not inhibit the proteinases elastase and cathepsin G. This chain is Veswaprin-c, found in Demansia vestigiata (Lesser black whip snake).